Consider the following 180-residue polypeptide: Inner membrane-spanning protein YciB (180 aa).

The next 5 helical transmembrane spans lie at 22–42 (IFVASGALIVATLVALAFTWL), 50–70 (MTLVTAAMVLVFGTLTLAFHS), 72–92 (LFIKWKVTVLYVLFALALLVS), 121–141 (LSWAIFFLVCGLLNIYVAFWL), and 149–169 (FKVFGLTALTLIFTLISGVYI).

This sequence belongs to the YciB family.

It localises to the cell inner membrane. In terms of biological role, plays a role in cell envelope biogenesis, maintenance of cell envelope integrity and membrane homeostasis. This Yersinia pseudotuberculosis serotype O:1b (strain IP 31758) protein is Inner membrane-spanning protein YciB.